Consider the following 390-residue polypeptide: 3-ketoacyl-CoA thiolase (390 aa).

The Acyl-thioester intermediate role is filled by Cys95. Active-site proton acceptor residues include His346 and Cys376.

This sequence belongs to the thiolase-like superfamily. Thiolase family. As to quaternary structure, heterotetramer of two alpha chains (FadB) and two beta chains (FadA).

The protein localises to the cytoplasm. The catalysed reaction is an acyl-CoA + acetyl-CoA = a 3-oxoacyl-CoA + CoA. Its pathway is lipid metabolism; fatty acid beta-oxidation. Functionally, catalyzes the final step of fatty acid oxidation in which acetyl-CoA is released and the CoA ester of a fatty acid two carbons shorter is formed. This chain is 3-ketoacyl-CoA thiolase, found in Psychrobacter sp. (strain PRwf-1).